We begin with the raw amino-acid sequence, 437 residues long: Pterin deaminase (437 aa).

A divalent metal cation is bound by residues histidine 80 and histidine 82. Lysine 85 is a binding site for substrate. Position 231 (histidine 231) interacts with a divalent metal cation. Glutamate 234 serves as the catalytic Proton donor. Aspartate 331 contacts a divalent metal cation. 331-332 (DN) lines the substrate pocket.

The protein belongs to the metallo-dependent hydrolases superfamily. Pterin deaminase family. A divalent metal cation serves as cofactor.

The catalysed reaction is a 2-amino-4-hydroxypteridine + H2O + H(+) = a 2,4-dihydroxypteridine + NH4(+). It carries out the reaction L-sepiapterin + H2O + H(+) = (S)-xanthopterin-B2 + NH4(+). Its function is as follows. Catalyzes the deamination of many pterin metabolites, such as formylpterin, pterin-6-carboxylate, pterin-7-carboxylate, pterin, hydroxymethylpterin, biopterin, D-(+)-neopterin, isoxanthopterin, sepiapterin, folate, xanthopterin, and 7,8-dihydrohydroxymethylpterin. May be involved in a degradative pathway for catabolizing pterin rings. In Rhizobium rhizogenes (strain K84 / ATCC BAA-868) (Agrobacterium radiobacter), this protein is Pterin deaminase.